A 273-amino-acid chain; its full sequence is Eukaryotic translation initiation factor 3 subunit G-2 (273 aa).

The segment at 165 to 193 (KYVPPFMKDGGGGPGGKNWGRGRERDDSS) is disordered. The span at 173–183 (DGGGGPGGKNW) shows a compositional bias: gly residues. In terms of domain architecture, RRM spans 193–271 (SAVRISNLSE…LILCVEWSKP (79 aa)).

It belongs to the eIF-3 subunit G family. Component of the eukaryotic translation initiation factor 3 (eIF-3) complex. The eIF-3 complex interacts with pix.

The protein resides in the cytoplasm. In terms of biological role, RNA-binding component of the eukaryotic translation initiation factor 3 (eIF-3) complex, which is involved in protein synthesis of a specialized repertoire of mRNAs and, together with other initiation factors, stimulates binding of mRNA and methionyl-tRNAi to the 40S ribosome. The eIF-3 complex specifically targets and initiates translation of a subset of mRNAs involved in cell proliferation. This subunit can bind 18S rRNA. The protein is Eukaryotic translation initiation factor 3 subunit G-2 of Drosophila yakuba (Fruit fly).